The following is a 166-amino-acid chain: Ribosome biogenesis regulatory protein homolog (166 aa).

Phosphoserine occurs at positions 34 and 64. The tract at residues 144-166 (KEKKLTSKQVRNTSKKIKRSRRH) is disordered. Positions 156–166 (TSKKIKRSRRH) are enriched in basic residues.

This sequence belongs to the RRS1 family. In terms of assembly, component of a hexameric 5S RNP precursor complex, composed of 5S RNA, rrs1, rpf2, rpl5a/rpl5b, rpl11a/rpl11b and syo1; this complex acts as a precursor for ribosome assembly. Interacts with sad1.

Its subcellular location is the nucleus. The protein localises to the nucleolus. In terms of biological role, involved in ribosomal large subunit assembly. This Schizosaccharomyces pombe (strain 972 / ATCC 24843) (Fission yeast) protein is Ribosome biogenesis regulatory protein homolog.